The sequence spans 221 residues: Probable GTP-binding protein EngB (221 aa).

The region spanning Pro23–Glu211 is the EngB-type G domain. Mg(2+)-binding residues include Ser38 and Thr60.

The protein belongs to the TRAFAC class TrmE-Era-EngA-EngB-Septin-like GTPase superfamily. EngB GTPase family. The cofactor is Mg(2+).

In terms of biological role, necessary for normal cell division and for the maintenance of normal septation. The protein is Probable GTP-binding protein EngB of Polynucleobacter asymbioticus (strain DSM 18221 / CIP 109841 / QLW-P1DMWA-1) (Polynucleobacter necessarius subsp. asymbioticus).